Here is a 525-residue protein sequence, read N- to C-terminus: Ubiquitin carboxyl-terminal hydrolase 22 (525 aa).

The UBP-type zinc finger occupies 21–138; the sequence is PGCSHLGSFK…KEEQRKAWKM (118 aa). The Zn(2+) site is built by C23, H25, C63, C66, C76, C79, C84, H89, H93, H99, C112, and C115. K129 bears the N6-acetyllysine mark. T147 is subject to Phosphothreonine. Positions 176 to 520 constitute a USP domain; it reads RGLINLGNTC…EGYLLFYHKQ (345 aa). C185 (nucleophile) is an active-site residue. Residue S237 is modified to Phosphoserine. The active-site Proton acceptor is H479.

The protein belongs to the peptidase C19 family. UBP8 subfamily. As to quaternary structure, component of some SAGA transcription coactivator-HAT complexes, at least composed of ATXN7, ATXN7L3, ENY2, GCN5L2, SUPT3H, TAF10, TRRAP and USP22. Within the SAGA complex, ATXN7L3, ENY2 and USP22 form a subcomplex required for histone deubiquitination. Interacts directly with ATXN7L3; leading to its recruitment to the SAGA complex. Interacts with ATXN7L3 and weakly with ATXN7L3B. Interacts with MED1. Phosphorylated in G2/M phase, but not in G1 phase by CDK1. Post-translationally, ubiquitinated and subsequently degraded in a CDC20-dependent manner. In terms of tissue distribution, highly expressed in brain and weakly in other organs.

Its subcellular location is the nucleus. It localises to the cytoplasm. The enzyme catalyses Thiol-dependent hydrolysis of ester, thioester, amide, peptide and isopeptide bonds formed by the C-terminal Gly of ubiquitin (a 76-residue protein attached to proteins as an intracellular targeting signal).. Functionally, deubiquitinase that plays a role in several cellular processes including transcriptional regulation, cell cycle progression or innate immunity. As part of the transcription regulatory histone acetylation (HAT) complex SAGA, catalyzes the deubiquitination of both histones H2A and H2B, thereby acting as a transcriptional coactivator. Recruited to specific gene promoters by activators such as MYC, where it is required for transcription. Facilitates cell-cycle progression by stabilizing CCNB1 and antagonizing its proteasome-mediated degradation in a cell cycle-specific manner. Modulates cell cycle progression and apoptosis also by antagonizing TP53 transcriptional activation through deacetylase SIRT1 stabilization. Plays multiple roles in immunity and inflammation. Participates in antiviral response by deubiquitinating the importin KPNA2, leading to IRF3 nuclear translocation and subsequent type I interferon production. Acts as a central regulator of type III IFN signaling by negatively regulating STING1 activation and ubiquitination. Inhibits NLRP3 inflammasome activation by promoting NLRP3 degradation through ATG5-dependent autophagy. Deubiquitinates CD274 to induce its stabilization and thereby participates in maintenance of immune tolerance to self. Controls necroptotic cell death by regulating RIPK3 phosphorylation and ubiquitination. During bacterial infection, promotes pro-inflammatory response by targeting TRAF6 and removing its 'Lys-48'-linked polyubiquitination. This chain is Ubiquitin carboxyl-terminal hydrolase 22 (Usp22), found in Mus musculus (Mouse).